The primary structure comprises 224 residues: Urease accessory protein UreF (224 aa).

This sequence belongs to the UreF family. In terms of assembly, ureD, UreF and UreG form a complex that acts as a GTP-hydrolysis-dependent molecular chaperone, activating the urease apoprotein by helping to assemble the nickel containing metallocenter of UreC. The UreE protein probably delivers the nickel.

The protein localises to the cytoplasm. Functionally, required for maturation of urease via the functional incorporation of the urease nickel metallocenter. In Pseudomonas putida (strain ATCC 700007 / DSM 6899 / JCM 31910 / BCRC 17059 / LMG 24140 / F1), this protein is Urease accessory protein UreF.